The following is a 147-amino-acid chain: Histidine-containing phosphotransfer protein 1 (147 aa).

Residues 38-133 enclose the HPt domain; the sequence is APDFVSEVVT…YDLRNKFQAM (96 aa). H79 is subject to Phosphohistidine.

Post-translationally, two-component system major event consists of a His-to-Asp phosphorelay between a sensor histidine kinase (HK) and a response regulator (RR). In plants, the His-to-Asp phosphorelay involves an additional intermediate named Histidine-containing phosphotransfer protein (HPt). This multistep phosphorelay consists of a His-Asp-His-Asp sequential transfer of a phosphate group between first a His and an Asp of the HK protein, followed by the transfer to a conserved His of the HPt protein and finally the transfer to an Asp in the receiver domain of the RR protein. Widely expressed.

It localises to the cytoplasm. The protein resides in the cytosol. Its subcellular location is the nucleus. Functionally, functions as a two-component phosphorelay mediators between cytokinin sensor histidine kinases and response regulators (B-type ARRs). Plays an important role in propagating cytokinin signal transduction through the multistep His-to-Asp phosphorelay. Functions as a positive regulator of the cytokinin signaling pathway. May play a regulatory role in salt and drought tolerance during plant development. The chain is Histidine-containing phosphotransfer protein 1 from Oryza sativa subsp. japonica (Rice).